Reading from the N-terminus, the 460-residue chain is Photosystem II CP43 reaction center protein (460 aa).

Residues 1–35 are Cytoplasmic-facing; it reads MVTLSNTSMVGGRDLPSTGFAWWSGNARLINLSGK. Residues 36–58 form a helical membrane-spanning segment; the sequence is LLGAHVAHAGLIVFWAGAMTLFE. Residues 59–98 lie on the Lumenal, thylakoid side of the membrane; sequence VAHFIPEKPMYEQGLILLPHIATLGWGVGPAGEVTDIFPF. A helical transmembrane segment spans residues 99-121; the sequence is FVVGVLHLISSAVLGLGGIYHAL. Topologically, residues 122–142 are cytoplasmic; sequence RGPEVLEEYSSFFGYDWKDKN. Residues 143–165 form a helical membrane-spanning segment; it reads QMTNIIGYHLILLGCGALLLVFK. Residues 166–220 lie on the Lumenal, thylakoid side of the membrane; the sequence is AMFFGGVYDTWAPGGGDVRVITNPTLNPAIIFGYLLKAPFGGEGWIISVNNMEDI. The helical transmembrane segment at 221–240 threads the bilayer; sequence IGGHIWIGLICISGGIWHIL. Residues 241–255 lie on the Cytoplasmic side of the membrane; sequence TKPFGWARRALIWSG. Residues 256–276 form a helical membrane-spanning segment; that stretch reads EAYLSYSLGALSLMGFIASVF. The Lumenal, thylakoid segment spans residues 277 to 411; sequence VWFNNTAYPS…NSFNYVSPRA (135 aa). [CaMn4O5] cluster-binding residues include Glu341 and Arg344. Residues 412 to 436 form a helical membrane-spanning segment; the sequence is WLATSHFVLGFFFLVGHLWHAGRAR. Residues 437-460 are Cytoplasmic-facing; that stretch reads AAAAGFEKGIDRETEPTLFMPDLD.

This sequence belongs to the PsbB/PsbC family. PsbC subfamily. As to quaternary structure, PSII is composed of 1 copy each of membrane proteins PsbA, PsbB, PsbC, PsbD, PsbE, PsbF, PsbH, PsbI, PsbJ, PsbK, PsbL, PsbM, PsbT, PsbX, PsbY, PsbZ, Psb30/Ycf12, peripheral proteins PsbO, CyanoQ (PsbQ), PsbU, PsbV and a large number of cofactors. It forms dimeric complexes. Binds multiple chlorophylls and provides some of the ligands for the Ca-4Mn-5O cluster of the oxygen-evolving complex. It may also provide a ligand for a Cl- that is required for oxygen evolution. PSII binds additional chlorophylls, carotenoids and specific lipids. serves as cofactor.

Its subcellular location is the cellular thylakoid membrane. One of the components of the core complex of photosystem II (PSII). PSII binds chlorophyll and helps catalyze the primary light-induced photochemical processes of PSII. PSII is a light-driven water:plastoquinone oxidoreductase, using light energy to abstract electrons from H(2)O, generating O(2) and a proton gradient subsequently used for ATP formation. Required for correct assembly of PSII. This Synechocystis sp. (strain ATCC 27184 / PCC 6803 / Kazusa) protein is Photosystem II CP43 reaction center protein.